A 292-amino-acid chain; its full sequence is High-affinity heme uptake system protein IsdE (292 aa).

An N-terminal signal peptide occupies residues 1-19 (MRIIKYLTILVISVVILTS). Cys20 carries N-palmitoyl cysteine lipidation. Cys20 carries the S-diacylglycerol cysteine lipid modification. One can recognise a Fe/B12 periplasmic-binding domain in the interval 35–291 (RIVPTTVALT…QLYDLFYKDK (257 aa)). 6 residues coordinate heme: Val41, Ala42, Ser60, Tyr61, Met78, and His229.

The protein belongs to the bacterial solute-binding protein 8 family. The cofactor is heme b.

The protein resides in the cell membrane. In terms of biological role, involved in heme (porphyrin) scavenging. Binds Fe(2+) and Fe(3+) heme but the largest fraction is Fe(2+) heme. Functions as a high-affinity heme binding protein and probably has a role in relaying heme-iron from cell wall-anchored isd proteins receptors to the probable permease IsdF. This is High-affinity heme uptake system protein IsdE (isdE) from Staphylococcus aureus (strain Mu3 / ATCC 700698).